A 474-amino-acid chain; its full sequence is BPI fold-containing family B member 1 (474 aa).

A signal peptide spans 1 to 21 (MAGPWIITLLCGLLGATLVQA). N-linked (GlcNAc...) asparagine glycosylation is found at Asn-153, Asn-160, Asn-263, and Asn-400. Cys-157 and Cys-200 are disulfide-bonded.

It belongs to the BPI/LBP/Plunc superfamily. Plunc family. Expressed in tongue, lung, thymus, and stomach. Expressed in epithelia of palate, anterior pharynx, trachea and upper bronchi. Expressed in distal tip of papillae in the anterior third of the tongue and in serous cells of von Ebner glands in the posterior third of the tongue. Expressed in columnar epithelium of the duodenum in embryonic gut at 16.5 dpc.

The protein resides in the secreted. May play a role in innate immunity in mouth, nose and lungs. Binds bacterial lipopolysaccharide (LPS) and modulates the cellular responses to LPS. May be involved in formation of the left-right axis in the node of the developing embryo. The polypeptide is BPI fold-containing family B member 1 (Bpifb1) (Mus musculus (Mouse)).